Here is a 397-residue protein sequence, read N- to C-terminus: Glia-derived nexin (397 aa).

A signal peptide spans 1 to 19 (MNWHFPFFILTTVTLYSVH). Asn159 carries an N-linked (GlcNAc...) asparagine glycan.

It belongs to the serpin family. In terms of tissue distribution, most abundant in seminal vesicles.

It is found in the secreted. Its subcellular location is the extracellular space. Its function is as follows. Serine protease inhibitor with activity toward thrombin, trypsin, and urokinase. Promotes neurite extension by inhibiting thrombin. Binds heparin. The polypeptide is Glia-derived nexin (Serpine2) (Mus musculus (Mouse)).